We begin with the raw amino-acid sequence, 1414 residues long: Phenyloxazoline synthase MbtB (1414 aa).

The 74-residue stretch at 5–78 folds into the Carrier 1 domain; sequence TACSEIIRAE…AWSQLVSAGT (74 aa). S39 carries the post-translational modification O-(pantetheine 4'-phosphoryl)serine. The tract at residues 96–394 is condensation/cyclization; it reads EGEPFPLAPM…SSLLLDVDLT (299 aa). An adenylation region spans residues 579–975; the sequence is SYAQLRDQAS…RLPGVHAAAA (397 aa). One can recognise a Carrier 2 domain in the interval 1057-1135; that stretch reads APRTVLQRAL…ALAQLLTGRE (79 aa). At S1094 the chain carries O-(pantetheine 4'-phosphoryl)serine. The interval 1188–1413 is thioesterase; the sequence is GAVLVFPHAG…AVARMVSADV (226 aa).

Belongs to the ATP-dependent AMP-binding enzyme family. MbtB subfamily. Requires pantetheine 4'-phosphate as cofactor. Post-translationally, 4'-phosphopantetheine is transferred from CoA to a specific serine in each of the two carrier protein domains, leading to their activation from apo to holo forms.

Its pathway is siderophore biosynthesis; mycobactin biosynthesis. Functionally, involved in the initial steps of the mycobactin biosynthetic pathway. Putatively couples activated salicylic acid with serine or threonine and cyclizes this precursor to the hydroxyphenyloxazoline ring system present in this class of siderophores. Essential for growth in macrophages. This Mycobacterium tuberculosis (strain ATCC 25618 / H37Rv) protein is Phenyloxazoline synthase MbtB (mbtB).